Reading from the N-terminus, the 335-residue chain is Ornithine carbamoyltransferase (335 aa).

Carbamoyl phosphate is bound by residues 56 to 59, Q83, R107, and 134 to 137; these read STRT and HPTQ. Residues N168, D232, and 236 to 237 contribute to the L-ornithine site; that span reads SM. Carbamoyl phosphate-binding positions include 274–275 and R320; that span reads CL.

It belongs to the aspartate/ornithine carbamoyltransferase superfamily. OTCase family.

The protein localises to the cytoplasm. It carries out the reaction carbamoyl phosphate + L-ornithine = L-citrulline + phosphate + H(+). The protein operates within amino-acid biosynthesis; L-arginine biosynthesis; L-arginine from L-ornithine and carbamoyl phosphate: step 1/3. Functionally, reversibly catalyzes the transfer of the carbamoyl group from carbamoyl phosphate (CP) to the N(epsilon) atom of ornithine (ORN) to produce L-citrulline. The chain is Ornithine carbamoyltransferase from Pectobacterium atrosepticum (strain SCRI 1043 / ATCC BAA-672) (Erwinia carotovora subsp. atroseptica).